A 186-amino-acid chain; its full sequence is Peptidyl-tRNA hydrolase (186 aa).

Tyr14 contacts tRNA. His19 functions as the Proton acceptor in the catalytic mechanism. The tRNA site is built by Tyr64, Asn66, and Asn113.

This sequence belongs to the PTH family. In terms of assembly, monomer.

The protein localises to the cytoplasm. The catalysed reaction is an N-acyl-L-alpha-aminoacyl-tRNA + H2O = an N-acyl-L-amino acid + a tRNA + H(+). Hydrolyzes ribosome-free peptidyl-tRNAs (with 1 or more amino acids incorporated), which drop off the ribosome during protein synthesis, or as a result of ribosome stalling. In terms of biological role, catalyzes the release of premature peptidyl moieties from peptidyl-tRNA molecules trapped in stalled 50S ribosomal subunits, and thus maintains levels of free tRNAs and 50S ribosomes. The polypeptide is Peptidyl-tRNA hydrolase (Agathobacter rectalis (strain ATCC 33656 / DSM 3377 / JCM 17463 / KCTC 5835 / VPI 0990) (Eubacterium rectale)).